The primary structure comprises 510 residues: ATP synthase subunit alpha (510 aa).

169–176 (GDRQTGKT) is a binding site for ATP.

It belongs to the ATPase alpha/beta chains family. In terms of assembly, F-type ATPases have 2 components, CF(1) - the catalytic core - and CF(0) - the membrane proton channel. CF(1) has five subunits: alpha(3), beta(3), gamma(1), delta(1), epsilon(1). CF(0) has four main subunits: a(1), b(1), b'(1) and c(9-12).

The protein localises to the cell inner membrane. It carries out the reaction ATP + H2O + 4 H(+)(in) = ADP + phosphate + 5 H(+)(out). Produces ATP from ADP in the presence of a proton gradient across the membrane. The alpha chain is a regulatory subunit. In Rhodospirillum rubrum (strain ATCC 11170 / ATH 1.1.1 / DSM 467 / LMG 4362 / NCIMB 8255 / S1), this protein is ATP synthase subunit alpha.